Here is a 398-residue protein sequence, read N- to C-terminus: NADH-ubiquinone oxidoreductase 49 kDa subunit (398 aa).

Belongs to the complex I 49 kDa subunit family.

Its subcellular location is the mitochondrion. It carries out the reaction a ubiquinone + NADH + 5 H(+)(in) = a ubiquinol + NAD(+) + 4 H(+)(out). In terms of biological role, core subunit of the mitochondrial membrane respiratory chain NADH dehydrogenase (Complex I) that is believed to belong to the minimal assembly required for catalysis. Complex I functions in the transfer of electrons from NADH to the respiratory chain. The immediate electron acceptor for the enzyme is believed to be ubiquinone. Component of the iron-sulfur (IP) fragment of the enzyme. Component of the iron-sulfur (IP) fragment of the enzyme. The chain is NADH-ubiquinone oxidoreductase 49 kDa subunit (NAD7) from Pylaiella littoralis (Seaweed).